A 159-amino-acid chain; its full sequence is Growth arrest and DNA damage-inducible protein GADD45 gamma (159 aa).

Residues 43–86 (VYESAKVLNVDPDNVTFCVLAADEEDEGDIALQIHFTLIQAFCC) form a homodimerization region.

Belongs to the GADD45 family. Undergoes concentration-dependent homodimerization, which is required for growth inhibititory activity and enhances interaction with PCNA. Interacts with GADD45GIP1. Interacts with PCNA.

Involved in the regulation of growth and apoptosis. Mediates activation of stress-responsive MTK1/MEKK4 MAPKKK. The chain is Growth arrest and DNA damage-inducible protein GADD45 gamma (GADD45G) from Bos taurus (Bovine).